The primary structure comprises 331 residues: WW domain-containing protein C2F3.14c (331 aa).

The tract at residues Met1 to Ile184 is disordered. Residues Ala9 to Val22 show a composition bias toward polar residues. Positions Asn23–Asn41 are enriched in low complexity. Residues Ser57–Ala89 show a composition bias toward polar residues. Residues Arg105–Pro145 are compositionally biased toward pro residues. Polar residues predominate over residues Ser158–Ile184. A WW domain is found at Ser187–Glu220. The disordered stretch occupies residues Tyr290–Lys309. A compositionally biased stretch (basic and acidic residues) spans Arg292–Lys309.

It is found in the nucleus. This chain is WW domain-containing protein C2F3.14c, found in Schizosaccharomyces pombe (strain 972 / ATCC 24843) (Fission yeast).